The primary structure comprises 348 residues: Phosphatidylinositol 3,4,5-trisphosphate 3-phosphatase ptn1 (348 aa).

One can recognise a Phosphatase tensin-type domain in the interval 18–189; the sequence is EKVNRSFAYL…YYIEILKQFP (172 aa). Cysteine 129 (phosphocysteine intermediate) is an active-site residue.

It is found in the cytoplasmic vesicle. It carries out the reaction a 1,2-diacyl-sn-glycero-3-phospho-(1D-myo-inositol-3,4,5-trisphosphate) + H2O = a 1,2-diacyl-sn-glycero-3-phospho-(1D-myo-inositol-4,5-bisphosphate) + phosphate. The catalysed reaction is 1,2-dioctanoyl-sn-glycero-3-phospho-(1D-myo-inositol-3,4,5-trisphosphate) + H2O = 1,2-dioctanoyl-sn-glycero-3-phospho-(1D-myo-inositol-4,5-bisphosphate) + phosphate. The enzyme catalyses 1,2-dihexadecanoyl-sn-glycero-3-phospho-(1D-myo-inositol-3,4,5-trisphosphate) + H2O = 1,2-dihexadecanoyl-sn-glycero-3-phospho-(1D-myo-inositol-4,5-bisphosphate) + phosphate. Acts as a phosphoinositide 3-phosphatase and regulates PtdIns(3,4,5)P3 levels. This chain is Phosphatidylinositol 3,4,5-trisphosphate 3-phosphatase ptn1 (ptn1), found in Schizosaccharomyces pombe (strain 972 / ATCC 24843) (Fission yeast).